The primary structure comprises 125 residues: MMFSKPVVLATTALATFAAATPLVARTEPTCSSTEIKCCENVGTAAVVSSVLTPILVSIPLVGPLLSLLGLNAVVALLFGTVDVVLGLTCSGIDVGGSCNAQTVCCENVQFNGLINVGCVAIDIL.

The first 20 residues, 1-20, serve as a signal peptide directing secretion; that stretch reads MMFSKPVVLATTALATFAAA. Disulfide bonds link cysteine 31/cysteine 105, cysteine 38/cysteine 99, cysteine 39/cysteine 90, and cysteine 106/cysteine 119.

This sequence belongs to the fungal hydrophobin family. Self-assembles to form functional amyloid fibrils called rodlets. Self-assembly into fibrillar rodlets occurs spontaneously at hydrophobic:hydrophilic interfaces and the rodlets further associate laterally to form amphipathic monolayers.

The protein resides in the secreted. It localises to the cell wall. Functionally, aerial growth, conidiation, and dispersal of filamentous fungi in the environment rely upon a capability of their secreting small amphipathic proteins called hydrophobins (HPBs) with low sequence identity. Class I can self-assemble into an outermost layer of rodlet bundles on aerial cell surfaces, conferring cellular hydrophobicity that supports fungal growth, development and dispersal; whereas Class II form highly ordered films at water-air interfaces through intermolecular interactions but contribute nothing to the rodlet structure. Hydph8 is an unclassified hydrophobin involved in mycelial growth. The chain is Unclassified hydrophobin 8 from Pleurotus ostreatus (strain PC15) (Oyster mushroom).